We begin with the raw amino-acid sequence, 381 residues long: 1-deoxy-D-xylulose 5-phosphate reductoisomerase (381 aa).

5 residues coordinate NADPH: Thr-10, Gly-11, Ser-12, Ile-13, and Asn-120. Lys-121 lines the 1-deoxy-D-xylulose 5-phosphate pocket. Residue Glu-122 coordinates NADPH. Position 146 (Asp-146) interacts with Mn(2+). 1-deoxy-D-xylulose 5-phosphate is bound by residues Ser-147, Glu-148, Ser-172, and His-195. A Mn(2+)-binding site is contributed by Glu-148. Gly-201 is an NADPH binding site. 1-deoxy-D-xylulose 5-phosphate is bound by residues Ser-208, Asn-213, Lys-214, and Glu-217. Glu-217 contacts Mn(2+).

Belongs to the DXR family. Mg(2+) is required as a cofactor. The cofactor is Mn(2+).

The catalysed reaction is 2-C-methyl-D-erythritol 4-phosphate + NADP(+) = 1-deoxy-D-xylulose 5-phosphate + NADPH + H(+). It participates in isoprenoid biosynthesis; isopentenyl diphosphate biosynthesis via DXP pathway; isopentenyl diphosphate from 1-deoxy-D-xylulose 5-phosphate: step 1/6. Functionally, catalyzes the NADPH-dependent rearrangement and reduction of 1-deoxy-D-xylulose-5-phosphate (DXP) to 2-C-methyl-D-erythritol 4-phosphate (MEP). This is 1-deoxy-D-xylulose 5-phosphate reductoisomerase from Thermodesulfovibrio yellowstonii (strain ATCC 51303 / DSM 11347 / YP87).